The chain runs to 329 residues: Galactosylgalactosylxylosylprotein 3-beta-glucuronosyltransferase 2 (329 aa).

The Cytoplasmic portion of the chain corresponds to 1 to 2; it reads MK. The chain crosses the membrane as a helical; Signal-anchor for type II membrane protein span at residues 3–23; that stretch reads SALFSRFFILLPWILIVIIML. Residues 24–329 are Lumenal-facing; it reads DVDTRRPAPP…YRLDTVKIEV (306 aa). The segment at 45–87 is disordered; that stretch reads VGRGGARLPPRRGGPDSGPGRGWEKRNESRPHARPRPEPPLPT. The span at 66–81 shows a compositional bias: basic and acidic residues; the sequence is GWEKRNESRPHARPRP. An N-linked (GlcNAc...) asparagine glycan is attached at Asn-71. UDP-alpha-D-glucuronate is bound by residues 93-95, Asp-124, Arg-161, Arg-166, and 191-193; these read PTY and DDD. Residue Asp-193 participates in Mn(2+) binding. The segment at 240–249 is interaction with galactose moiety of substrate glycoprotein; the sequence is WRADRPFAID. Glu-279 acts as the Proton donor/acceptor in catalysis. Residue Asn-298 is glycosylated (N-linked (GlcNAc...) asparagine). A UDP-alpha-D-glucuronate-binding site is contributed by 306–308; the sequence is HTR.

Belongs to the glycosyltransferase 43 family. Homodimer. Mn(2+) is required as a cofactor.

It is found in the golgi apparatus membrane. The catalysed reaction is 3-O-(beta-D-galactosyl-(1-&gt;3)-beta-D-galactosyl-(1-&gt;4)-beta-D-xylosyl)-L-seryl-[protein] + UDP-alpha-D-glucuronate = 3-O-(beta-D-GlcA-(1-&gt;3)-beta-D-Gal-(1-&gt;3)-beta-D-Gal-(1-&gt;4)-beta-D-Xyl)-L-seryl-[protein] + UDP + H(+). The protein operates within protein modification; protein glycosylation. Functionally, involved in the biosynthesis of L2/HNK-1 carbohydrate epitope on both glycolipids and glycoproteins. This chain is Galactosylgalactosylxylosylprotein 3-beta-glucuronosyltransferase 2 (B3GAT2), found in Canis lupus familiaris (Dog).